The chain runs to 231 residues: MADLPETPAFGAAFSDEEEAARALEAGRWLFSQTCSFVMGCVSLDTLPDHDLSEIAFAGRSNVGKSSLVNALTGRKTLARTSNTPGRTQELNYFRLGPEAQDPALMMVDLPGYGFAEAPKDAVKRWTRLIMAYLRGRPALRRVCLLIDSRHGIKENDRDVMRMLDEAAVSYQIVLTKADKLKAAEITDVLARVVAETAKHVAAHPDVIVTSSQSGAGIDLLRAQLAALASP.

Positions 51-231 (DLSEIAFAGR…RAQLAALASP (181 aa)) constitute an EngB-type G domain. GTP is bound by residues 59–66 (GRSNVGKS), 86–90 (GRTQE), 109–112 (DLPG), 176–179 (TKAD), and 210–212 (TSS). Residues Ser-66 and Thr-88 each coordinate Mg(2+).

It belongs to the TRAFAC class TrmE-Era-EngA-EngB-Septin-like GTPase superfamily. EngB GTPase family. Mg(2+) serves as cofactor.

In terms of biological role, necessary for normal cell division and for the maintenance of normal septation. The polypeptide is Probable GTP-binding protein EngB (Rhodospirillum rubrum (strain ATCC 11170 / ATH 1.1.1 / DSM 467 / LMG 4362 / NCIMB 8255 / S1)).